The sequence spans 289 residues: Protoheme IX farnesyltransferase (289 aa).

Helical transmembrane passes span 9–29, 40–60, 89–109, 110–130, 134–154, 155–175, 190–209, 228–248, and 269–289; these read VALMKLRVVELLLITTVPVMM, LIAVTLVAGTLAAGSANTINC, LTFGIVIGIVSTLLFGFLVNW, PSALLADGAIAFYVFVYTLGL, TPSNIVIGGAAGCFPVLIGWS, AVTGTVGWAAVLLFAVVFFWT, YAAAGVPMLPVVASVQVVTR, VASTGPVYLVAAVAVGAWFLV, and FHMSITYLTLLFVAIAVTALV.

Belongs to the UbiA prenyltransferase family. Protoheme IX farnesyltransferase subfamily.

Its subcellular location is the cell membrane. The enzyme catalyses heme b + (2E,6E)-farnesyl diphosphate + H2O = Fe(II)-heme o + diphosphate. It participates in porphyrin-containing compound metabolism; heme O biosynthesis; heme O from protoheme: step 1/1. Converts heme B (protoheme IX) to heme O by substitution of the vinyl group on carbon 2 of heme B porphyrin ring with a hydroxyethyl farnesyl side group. This chain is Protoheme IX farnesyltransferase, found in Frankia casuarinae (strain DSM 45818 / CECT 9043 / HFP020203 / CcI3).